Here is a 404-residue protein sequence, read N- to C-terminus: Argininosuccinate synthase (404 aa).

ATP is bound by residues 10-18 and alanine 38; that span reads AYSGGVDTS. Tyrosine 89 lines the L-citrulline pocket. Glycine 119 is an ATP binding site. 3 residues coordinate L-aspartate: threonine 121, asparagine 125, and aspartate 126. An L-citrulline-binding site is contributed by asparagine 125. Residues arginine 129, serine 177, serine 186, glutamate 262, and tyrosine 274 each contribute to the L-citrulline site.

Belongs to the argininosuccinate synthase family. Type 1 subfamily. Homotetramer.

Its subcellular location is the cytoplasm. The catalysed reaction is L-citrulline + L-aspartate + ATP = 2-(N(omega)-L-arginino)succinate + AMP + diphosphate + H(+). The protein operates within amino-acid biosynthesis; L-arginine biosynthesis; L-arginine from L-ornithine and carbamoyl phosphate: step 2/3. This chain is Argininosuccinate synthase, found in Prochlorococcus marinus (strain MIT 9215).